A 693-amino-acid chain; its full sequence is MNKPFLLELGLEELPARFVTPSITQLAEKVQAWLDDKGLSYGEIHSYATPRRLAILVENLADRQPDIHDESRGPALKIAKDESGAWTKAALGFAKGQGVETSQLEIKAVNGTDYVFAKTHKKGEKTSVLLPELKELITGLTFPKSMRWNTYSLRYARPIQWLVALYGEDVIPFSINGIETGRNTTGHRFLGADFPLDNPIEYADALKRQYVIADAEERKAAIVSQLKQMEEEHSWVVPIDEALLEEVTQLVEYPTALSGSFDDSFLALPKEVLITTMREHQRYFPVEAKDGRLLPYFITVRNGNEEYIENVAKGNEKVLRARLSDAAFFYHEDQKISLQAANAKLDNIVFHEAIGTMGEKVARIGELSKWLAGEANLGAQERQTVERAAAIAKFDLVTYMVGEFPELQGRMGQEYAEKAGETPQVAKAIYEQYLPRYAGDKVPETEAGAVLALADKLDTVVSCFSIGLIPTGSQDPYALRRQATGIIHILLQTEMPLTLENMAVHALDSIAKKGFMTEKVETTKQELISFFANRLKHVMLEAGFRYDIVDAVLAAPLVDVYTMFAKARLLTERAEDREFKEVTESLSRVTNLAKKAPKGVFVSENLFENETESRLLAATLEVEFGLAEAWKVKDAYAAYQALAQCRATINTFFDHTMVMADNEATRNNRLALLDRLAKSIQSYADFQKIVFSA.

The protein belongs to the class-II aminoacyl-tRNA synthetase family. As to quaternary structure, tetramer of two alpha and two beta subunits.

The protein localises to the cytoplasm. The enzyme catalyses tRNA(Gly) + glycine + ATP = glycyl-tRNA(Gly) + AMP + diphosphate. The sequence is that of Glycine--tRNA ligase beta subunit from Shouchella clausii (strain KSM-K16) (Alkalihalobacillus clausii).